The primary structure comprises 720 residues: Proline-rich receptor-like protein kinase PERK12 (720 aa).

The tract at residues 1–240 (MSDLGESPSS…GNGDGGGGGG (240 aa)) is disordered. The Extracellular segment spans residues 1-246 (MSDLGESPSS…GGGGGYQGKT (246 aa)). Pro residues predominate over residues 10 to 25 (SSPPAPPADTAPPPET). A compositionally biased stretch (low complexity) spans 26 to 35 (PSENSALPPV). Composition is skewed to pro residues over residues 52–84 (LSEPSTPPPDSQLPPLPSILPPLTDSPPPPSDS) and 92–116 (PSPPPPTSNESPSPPEDSETPPAPP). Asn117 carries an N-linked (GlcNAc...) asparagine glycan. Composition is skewed to pro residues over residues 123 to 138 (NPPPSQDLQSPPPSSP) and 147 to 207 (PESP…PPKT). The chain crosses the membrane as a helical span at residues 247-267 (MVGMAVAGFAIMALIGVVFLV). The Cytoplasmic portion of the chain corresponds to 268–720 (RRKKKRNIDS…ETRPFNNRRF (453 aa)). Positions 300–349 (QDPGKGYSSGPNGSMYNNSQQQQSSMGNSYGTAGGGYPHHQMQSSGTPDS) are disordered. Over residues 311-330 (NGSMYNNSQQQQSSMGNSYG) the composition is skewed to low complexity. One can recognise a Protein kinase domain in the interval 371-624 (FARKNILGEG…EVFRMIETAA (254 aa)). ATP-binding positions include 377 to 385 (LGEGGFGCV) and Lys399. Position 444 is a phosphotyrosine (Tyr444). Asp495 (proton acceptor) is an active-site residue. Residue Ser528 is modified to Phosphoserine. 2 positions are modified to phosphothreonine: Thr529 and Thr534. Residue Tyr542 is modified to Phosphotyrosine. Positions 698-720 (SAKSSSDFSGNESETRPFNNRRF) are disordered.

This sequence belongs to the protein kinase superfamily. Ser/Thr protein kinase family. Mostly expressed in apical parts, including flower buds, and particularly in anthers. Also present in root hairs.

The protein resides in the cell membrane. It catalyses the reaction L-seryl-[protein] + ATP = O-phospho-L-seryl-[protein] + ADP + H(+). The enzyme catalyses L-threonyl-[protein] + ATP = O-phospho-L-threonyl-[protein] + ADP + H(+). Functionally, regulates the auxin-related MAX (More Axillary Growth) pathway during the shoot branching. The sequence is that of Proline-rich receptor-like protein kinase PERK12 (PERK12) from Arabidopsis thaliana (Mouse-ear cress).